A 263-amino-acid polypeptide reads, in one-letter code: Small ribosomal subunit protein eS4, Y isoform 1 (263 aa).

An S4 RNA-binding domain is found at 42–104; it reads LPLIIFLRNR…TGEHFRLVYD (63 aa).

This sequence belongs to the eukaryotic ribosomal protein eS4 family.

This Macaca fuscata fuscata (Japanese macaque) protein is Small ribosomal subunit protein eS4, Y isoform 1 (RPS4Y1).